A 91-amino-acid polypeptide reads, in one-letter code: Acyl carrier protein AsbD (91 aa).

The Carrier domain maps to 4–82 (EALKNAVLKI…SLLDFMEELQ (79 aa)). Ser40 is subject to O-(pantetheine 4'-phosphoryl)serine.

This sequence belongs to the acyl carrier protein (ACP) family. In terms of processing, activated by the transfer of a 4'-phosphopantetheine group from CoA to Ser-40.

The protein operates within siderophore biosynthesis; petrobactin biosynthesis. Functionally, involved in the biosynthesis of petrobactin, a catecholate siderophore that functions in both iron acquisition and virulence. Aryl-carrier protein that activates 3,4-dihydroxybenzoate (3,4-DHBA) prior to its incorporation into petrobactin. The polypeptide is Acyl carrier protein AsbD (Bacillus anthracis).